The following is a 50-amino-acid chain: Insulin (50 aa).

3 disulfides stabilise this stretch: C7–C36, C19–C49, and C35–C40.

Belongs to the insulin family. In terms of assembly, heterodimer of a B chain and an A chain linked by two disulfide bonds.

Its subcellular location is the secreted. Insulin decreases blood glucose concentration. It increases cell permeability to monosaccharides, amino acids and fatty acids. It accelerates glycolysis, the pentose phosphate cycle, and glycogen synthesis in liver. The protein is Insulin (ins) of Myoxocephalus scorpius (Shorthorn sculpin).